The following is a 362-amino-acid chain: Probable protein phosphatase 2C 11 (362 aa).

In terms of domain architecture, PPM-type phosphatase spans 23–329 (KLGLSSMQGW…DNMTMVLVQF (307 aa)). 4 residues coordinate Mn(2+): D57, G58, D272, and D320.

This sequence belongs to the PP2C family. Mg(2+) serves as cofactor. It depends on Mn(2+) as a cofactor.

It carries out the reaction O-phospho-L-seryl-[protein] + H2O = L-seryl-[protein] + phosphate. The enzyme catalyses O-phospho-L-threonyl-[protein] + H2O = L-threonyl-[protein] + phosphate. The polypeptide is Probable protein phosphatase 2C 11 (Oryza sativa subsp. japonica (Rice)).